The sequence spans 198 residues: Small ribosomal subunit protein uS7 (198 aa).

Belongs to the universal ribosomal protein uS7 family. In terms of assembly, part of the 30S ribosomal subunit.

In terms of biological role, one of the primary rRNA binding proteins, it binds directly to 16S rRNA where it nucleates assembly of the head domain of the 30S subunit. Is located at the subunit interface close to the decoding center. The sequence is that of Small ribosomal subunit protein uS7 from Desulfurococcus amylolyticus (strain DSM 18924 / JCM 16383 / VKM B-2413 / 1221n) (Desulfurococcus kamchatkensis).